We begin with the raw amino-acid sequence, 229 residues long: Sugar fermentation stimulation protein homolog (229 aa).

The protein belongs to the SfsA family.

The protein is Sugar fermentation stimulation protein homolog of Clostridium novyi (strain NT).